The sequence spans 76 residues: Kappa-actitoxin-Avd4g (76 aa).

Positions 1-19 are cleaved as a signal peptide; the sequence is MNKALFLCLVVLCAAVVFA. Residues 20–31 constitute a propeptide that is removed on maturation; the sequence is AEDLQKAKHAPF. Disulfide bonds link C37/C72, C39/C65, and C55/C73.

Belongs to the sea anemone type 3 (BDS) potassium channel toxin family. Moderately expressed in the ectodermal tissue from the distal and proximal tentacles, body wall, and oral disk.

The protein resides in the secreted. Its subcellular location is the nematocyst. Blocks Kv3 voltage-gated potassium channels. Reduces blood pressure. The chain is Kappa-actitoxin-Avd4g from Anemonia viridis (Snakelocks anemone).